We begin with the raw amino-acid sequence, 163 residues long: N5-carboxyaminoimidazole ribonucleotide mutase (163 aa).

The substrate site is built by S11, D14, and R41.

Belongs to the AIR carboxylase family. Class I subfamily.

The enzyme catalyses 5-carboxyamino-1-(5-phospho-D-ribosyl)imidazole + H(+) = 5-amino-1-(5-phospho-D-ribosyl)imidazole-4-carboxylate. It functions in the pathway purine metabolism; IMP biosynthesis via de novo pathway; 5-amino-1-(5-phospho-D-ribosyl)imidazole-4-carboxylate from 5-amino-1-(5-phospho-D-ribosyl)imidazole (N5-CAIR route): step 2/2. In terms of biological role, catalyzes the conversion of N5-carboxyaminoimidazole ribonucleotide (N5-CAIR) to 4-carboxy-5-aminoimidazole ribonucleotide (CAIR). In Pseudomonas aeruginosa (strain ATCC 15692 / DSM 22644 / CIP 104116 / JCM 14847 / LMG 12228 / 1C / PRS 101 / PAO1), this protein is N5-carboxyaminoimidazole ribonucleotide mutase.